Consider the following 206-residue polypeptide: Ras-related protein Rab-7a (206 aa).

GTP is bound at residue 15-22 (GDSGVGKT). 2 positions are modified to phosphoserine: S17 and S23. 3 positions are modified to phosphothreonine: T34, T40, and T64. GTP-binding positions include 34–40 (TQQYRAT) and 63–67 (DTAGQ). Residues 37–45 (YRATVGADF) carry the Effector region motif. S72 bears the Phosphoserine mark. Phosphotyrosine occurs at positions 78 and 88. GTP contacts are provided by residues 125 to 128 (NKLD) and 157 to 158 (AK). Residues C205 and C206 are each lipidated (S-geranylgeranyl cysteine).

The protein belongs to the small GTPase superfamily. Rab family.

It is found in the cytoplasmic vesicle. The protein resides in the phagosome membrane. The protein localises to the late endosome membrane. Its subcellular location is the lysosome membrane. It localises to the autophagosome membrane. It is found in the lipid droplet. The enzyme catalyses GTP + H2O = GDP + phosphate + H(+). In terms of biological role, small GTPase which cycles between active GTP-bound and inactive GDP-bound states. In its active state, binds to a variety of effector proteins playing a key role in the regulation of endo-lysosomal trafficking. Governs early-to-late endosomal maturation, microtubule minus-end as well as plus-end directed endosomal migration and positioning, and endosome-lysosome transport through different protein-protein interaction cascades. Involved in lipophagy, a cytosolic lipase-independent autophagic pathway. Plays a role in phagocyte formation and acidification. This is Ras-related protein Rab-7a from Paramecium octaurelia.